The chain runs to 311 residues: Succinate dehydrogenase [ubiquinone] iron-sulfur subunit 2, mitochondrial (311 aa).

Residues 1–63 constitute a mitochondrion transit peptide; that stretch reads MILRRTLPRL…EEIRDHRRGD (63 aa). Positions 1 to 70 are disordered; the sequence is MILRRTLPRL…RGDAAAASPA (70 aa). The span at 51–63 shows a compositional bias: basic and acidic residues; the sequence is AKEEEIRDHRRGD. Residues 77-168 enclose the 2Fe-2S ferredoxin-type domain; sequence FRVYRWSPDA…ATTVTPLPHM (92 aa). The [2Fe-2S] cluster site is built by Cys-128, Cys-133, and Cys-148. In terms of domain architecture, 4Fe-4S ferredoxin-type spans 211–241; the sequence is ERKRLDGLYECILCACCSAACPSYWWNAEAF. [4Fe-4S] cluster is bound by residues Cys-221, Cys-224, and Cys-227. Cys-231 provides a ligand contact to [3Fe-4S] cluster. Trp-236 lines the a ubiquinone pocket. Residues Cys-279 and Cys-285 each coordinate [3Fe-4S] cluster. Position 289 (Cys-289) interacts with [4Fe-4S] cluster.

The protein belongs to the succinate dehydrogenase/fumarate reductase iron-sulfur protein family. In terms of assembly, component of complex II composed of eight subunits in plants: four classical SDH subunits SDH1, SDH2, SDH3 and SDH4 (a flavoprotein (FP), an iron-sulfur protein (IP), and a cytochrome b composed of a large and a small subunit.), as well as four subunits unknown in mitochondria from bacteria and heterotrophic eukaryotes. The cofactor is [2Fe-2S] cluster. [3Fe-4S] cluster is required as a cofactor. [4Fe-4S] cluster serves as cofactor.

It localises to the mitochondrion inner membrane. The enzyme catalyses a quinone + succinate = fumarate + a quinol. The protein operates within carbohydrate metabolism; tricarboxylic acid cycle; fumarate from succinate (eukaryal route): step 1/1. Functionally, iron-sulfur protein (IP) subunit of succinate dehydrogenase (SDH) that is involved in complex II of the mitochondrial electron transport chain and is responsible for transferring electrons from succinate to ubiquinone (coenzyme Q). This Oryza sativa subsp. japonica (Rice) protein is Succinate dehydrogenase [ubiquinone] iron-sulfur subunit 2, mitochondrial.